Reading from the N-terminus, the 335-residue chain is Transcription factor bHLH63 (335 aa).

The segment at 110-160 (MTMNRDDLVEEGEEEKSKITEQNNGSTKSIKKMKHKAKKEENNFSNDSSKV) is disordered. Residues 178 to 228 (QATDSHSIAERVRREKISERMKFLQDLVPGCDKITGKAGMLDEIINYVQSL) form the bHLH domain.

Homodimer. Interacts with IBH1. Binds reversibly to CRY2 after blue light illumination. In terms of tissue distribution, expressed constitutively in roots, leaves, and stems.

It localises to the nucleus. Functionally, transcription factor that binds DNA to G box 5'-CACGTG-3' and, to a lower extent, to E-box 5'-CANNTG-3' in vitro. Binds to chromatin DNA of the FT gene and promotes its expression, and thus triggers flowering in response to blue light. The protein is Transcription factor bHLH63 (BHLH63) of Arabidopsis thaliana (Mouse-ear cress).